We begin with the raw amino-acid sequence, 412 residues long: WW domain-containing oxidoreductase (412 aa).

The interval 1–24 (MAALKYAGMEDTDSEDELPPGWEE) is disordered. Residues 16 to 49 (DELPPGWEERSTKDGWVYYANHEEMKTQWEHPKT) form the WW 1 domain. Positions 50 to 55 (GKKKRC) match the Nuclear localization signal motif. A WW 2 domain is found at 57 to 90 (GALPYGWEQETDDKGQIFYVDHINKRKTYFDPRQ). An NADP(+)-binding site is contributed by 128–134 (GANSGIG). Position 257 (Ser-257) interacts with substrate. Tyr-290 acts as the Proton acceptor in catalysis.

The protein belongs to the short-chain dehydrogenases/reductases (SDR) family.

The protein resides in the cytoplasm. It localises to the mitochondrion. Its subcellular location is the golgi apparatus. It is found in the lysosome. Putative oxidoreductase. Acts as a tumor suppressor and plays a role in apoptosis. May function synergistically with p53/TP53 to control genotoxic stress-induced cell death. Plays a role in TGFB1 signaling and TGFB1-mediated cell death. May also play a role in tumor necrosis factor (TNF)-mediated cell death. Required for normal bone development. Inhibits Wnt signaling. This is WW domain-containing oxidoreductase (wwox) from Danio rerio (Zebrafish).